The primary structure comprises 71 residues: uncharacterized protein (71 aa).

The helical transmembrane segment at 12–34 (GYLSLTLVTLPVCSSLHCYFLWT) threads the bilayer.

The protein resides in the membrane. This is an uncharacterized protein from Dictyostelium discoideum (Social amoeba).